The primary structure comprises 293 residues: ATP synthase gamma chain (293 aa).

It belongs to the ATPase gamma chain family. As to quaternary structure, F-type ATPases have 2 components, CF(1) - the catalytic core - and CF(0) - the membrane proton channel. CF(1) has five subunits: alpha(3), beta(3), gamma(1), delta(1), epsilon(1). CF(0) has three main subunits: a, b and c.

The protein resides in the cell membrane. In terms of biological role, produces ATP from ADP in the presence of a proton gradient across the membrane. The gamma chain is believed to be important in regulating ATPase activity and the flow of protons through the CF(0) complex. The chain is ATP synthase gamma chain from Streptococcus sanguinis.